The following is a 211-amino-acid chain: Small ribosomal subunit protein eS1 (211 aa).

Belongs to the eukaryotic ribosomal protein eS1 family.

The chain is Small ribosomal subunit protein eS1 from Archaeoglobus fulgidus (strain ATCC 49558 / DSM 4304 / JCM 9628 / NBRC 100126 / VC-16).